The following is a 96-amino-acid chain: Small ribosomal subunit protein uS17 (96 aa).

This sequence belongs to the universal ribosomal protein uS17 family. In terms of assembly, part of the 30S ribosomal subunit.

Functionally, one of the primary rRNA binding proteins, it binds specifically to the 5'-end of 16S ribosomal RNA. This Deinococcus radiodurans (strain ATCC 13939 / DSM 20539 / JCM 16871 / CCUG 27074 / LMG 4051 / NBRC 15346 / NCIMB 9279 / VKM B-1422 / R1) protein is Small ribosomal subunit protein uS17.